The chain runs to 247 residues: Aliphatic sulfonates import ATP-binding protein SsuB 1 (247 aa).

An ABC transporter domain is found at 7-222 (LSLSGVHKSF…KRSSYEFVET (216 aa)). 39 to 46 (GKSGCGKS) provides a ligand contact to ATP.

The protein belongs to the ABC transporter superfamily. Aliphatic sulfonates importer (TC 3.A.1.17.2) family. The complex is composed of two ATP-binding proteins (SsuB), two transmembrane proteins (SsuC) and a solute-binding protein (SsuA).

It localises to the cell membrane. The enzyme catalyses ATP + H2O + aliphatic sulfonate-[sulfonate-binding protein]Side 1 = ADP + phosphate + aliphatic sulfonateSide 2 + [sulfonate-binding protein]Side 1.. Part of the ABC transporter complex SsuABC involved in aliphatic sulfonates import. Responsible for energy coupling to the transport system. In Shouchella clausii (strain KSM-K16) (Alkalihalobacillus clausii), this protein is Aliphatic sulfonates import ATP-binding protein SsuB 1.